The following is a 382-amino-acid chain: 8-amino-7-oxononanoate synthase (382 aa).

Substrate-binding residues include arginine 22 and arginine 29. 109-110 (GF) contributes to the pyridoxal 5'-phosphate binding site. Histidine 134 is a substrate binding site. Pyridoxal 5'-phosphate-binding positions include serine 182, 207-210 (DDAH), and 233-236 (TLSK). Lysine 236 carries the N6-(pyridoxal phosphate)lysine modification. Threonine 345 is a binding site for substrate.

This sequence belongs to the class-II pyridoxal-phosphate-dependent aminotransferase family. BioF subfamily. In terms of assembly, homodimer. Requires pyridoxal 5'-phosphate as cofactor.

The catalysed reaction is 6-carboxyhexanoyl-[ACP] + L-alanine + H(+) = (8S)-8-amino-7-oxononanoate + holo-[ACP] + CO2. It functions in the pathway cofactor biosynthesis; biotin biosynthesis. Catalyzes the decarboxylative condensation of pimeloyl-[acyl-carrier protein] and L-alanine to produce 8-amino-7-oxononanoate (AON), [acyl-carrier protein], and carbon dioxide. This is 8-amino-7-oxononanoate synthase from Granulibacter bethesdensis (strain ATCC BAA-1260 / CGDNIH1).